Consider the following 135-residue polypeptide: Photosystem II extrinsic protein U (135 aa).

Residues 1-26 form the signal peptide; the sequence is MKNLVRLLAVIALIIGSFWGKVPAQA.

This sequence belongs to the PsbU family. As to quaternary structure, PSII is composed of 1 copy each of membrane proteins PsbA, PsbB, PsbC, PsbD, PsbE, PsbF, PsbH, PsbI, PsbJ, PsbK, PsbL, PsbM, PsbT, PsbX, PsbY, PsbZ, Psb30/Ycf12, peripheral proteins PsbO, CyanoQ (PsbQ), PsbU, PsbV and a large number of cofactors. It forms dimeric complexes.

The protein localises to the cellular thylakoid membrane. Functionally, one of the extrinsic, lumenal subunits of photosystem II (PSII). PSII is a light-driven water plastoquinone oxidoreductase, using light energy to abstract electrons from H(2)O, generating a proton gradient subsequently used for ATP formation. The extrinsic proteins stabilize the structure of photosystem II oxygen-evolving complex (OEC), the ion environment of oxygen evolution and protect the OEC against heat-induced inactivation. This Microcystis aeruginosa (strain NIES-843 / IAM M-2473) protein is Photosystem II extrinsic protein U.